The primary structure comprises 92 residues: Cell division protein FtsB (92 aa).

Residues M1 to L3 are Cytoplasmic-facing. Residues F4–F21 traverse the membrane as a helical segment. The Periplasmic portion of the chain corresponds to G22–D92. Residues D28–E62 are a coiled coil.

This sequence belongs to the FtsB family. Part of a complex composed of FtsB, FtsL and FtsQ.

It localises to the cell inner membrane. Functionally, essential cell division protein. May link together the upstream cell division proteins, which are predominantly cytoplasmic, with the downstream cell division proteins, which are predominantly periplasmic. This Psychromonas ingrahamii (strain DSM 17664 / CCUG 51855 / 37) protein is Cell division protein FtsB.